The chain runs to 328 residues: Transcriptional regulator protein Pur-beta-B (328 aa).

Disordered stretches follow at residues 1 to 35 (MADGDSGSERGGSSGGPSGFSQHMSREQETQELAS), 100 to 124 (SPEQIAQASGEDGAGGPGGPRRALK), and 289 to 328 (QERQRDKMYDRRGPGERGGSLGPGAGGGGDDSETEDVDDD). Residue A2 is modified to N-acetylalanine. The span at 9 to 18 (ERGGSSGGPS) shows a compositional bias: gly residues. Basic and acidic residues predominate over residues 24–35 (MSREQETQELAS). Residues 27 to 260 (EQETQELASK…LRVSEVKPSY (234 aa)) form a DNA-binding region. The segment covering 289–303 (QERQRDKMYDRRGPG) has biased composition (basic and acidic residues). The span at 304–317 (ERGGSLGPGAGGGG) shows a compositional bias: gly residues. Residues 318–328 (DDSETEDVDDD) show a composition bias toward acidic residues.

Belongs to the PUR DNA-binding protein family.

The protein resides in the nucleus. Transcriptional regulator which can act as an activator or a repressor. This chain is Transcriptional regulator protein Pur-beta-B (purb-b), found in Xenopus laevis (African clawed frog).